We begin with the raw amino-acid sequence, 529 residues long: Zinc finger protein 572 (529 aa).

Residues 1–62 form a disordered region; it reads MEQEKKLLVS…EWSKRHRPQH (62 aa). Residues Lys-5 and Lys-6 each participate in a glycyl lysine isopeptide (Lys-Gly) (interchain with G-Cter in SUMO2) cross-link. A compositionally biased stretch (polar residues) spans 26–35; that stretch reads TGDTSMNNLE. The segment covering 36-55 has biased composition (basic and acidic residues); sequence TVHHNNSKADKLKEKPSEWS. 12 C2H2-type zinc fingers span residues 132–154, 160–182, 188–210, 216–238, 244–266, 272–294, 300–322, 328–350, 384–406, 412–434, 440–462, and 468–490; these read YKCS…QRTH, YKCS…LRMH, YQCG…ERTH, YKCP…HRSH, YECS…QRTH, YKCP…QRTH, YKCL…QRIH, YQCP…QKMH, YRCC…QRTH, YRCS…QRTH, YKCP…RRTH, and YKCT…RKIH.

Belongs to the krueppel C2H2-type zinc-finger protein family.

The protein resides in the nucleus. May be involved in transcriptional regulation. This is Zinc finger protein 572 (ZNF572) from Homo sapiens (Human).